Here is a 233-residue protein sequence, read N- to C-terminus: Lactate utilization protein C (233 aa).

The protein belongs to the LutC/YkgG family.

Functionally, is involved in L-lactate degradation and allows cells to grow with lactate as the sole carbon source. The protein is Lactate utilization protein C of Oceanobacillus iheyensis (strain DSM 14371 / CIP 107618 / JCM 11309 / KCTC 3954 / HTE831).